Consider the following 445-residue polypeptide: Tubby-like F-box protein 14 (445 aa).

One can recognise an F-box domain in the interval 56–114 (SSCWANLPPELLRDVIERLEASEAAWPSRKNVVACAAVCRTWRDMCREIVKNPEFCGKI).

The protein belongs to the TUB family. In terms of tissue distribution, ubiquitous.

The polypeptide is Tubby-like F-box protein 14 (TULP14) (Oryza sativa subsp. japonica (Rice)).